Here is a 207-residue protein sequence, read N- to C-terminus: uncharacterized protein (207 aa).

S-adenosyl-L-methionine-binding residues include Gly51 and Asp72.

This sequence belongs to the methyltransferase superfamily. YrrT family.

Its function is as follows. Could be a S-adenosyl-L-methionine-dependent methyltransferase. This is an uncharacterized protein from Staphylococcus carnosus (strain TM300).